A 120-amino-acid polypeptide reads, in one-letter code: Large ribosomal subunit protein bL20 (120 aa).

It belongs to the bacterial ribosomal protein bL20 family.

In terms of biological role, binds directly to 23S ribosomal RNA and is necessary for the in vitro assembly process of the 50S ribosomal subunit. It is not involved in the protein synthesizing functions of that subunit. The polypeptide is Large ribosomal subunit protein bL20 (Xanthobacter autotrophicus (strain ATCC BAA-1158 / Py2)).